The primary structure comprises 194 residues: A-type ATP synthase subunit E (194 aa).

It belongs to the V-ATPase E subunit family. In terms of assembly, has multiple subunits with at least A(3), B(3), C, D, E, F, H, I and proteolipid K(x).

It localises to the cell membrane. Its function is as follows. Component of the A-type ATP synthase that produces ATP from ADP in the presence of a proton gradient across the membrane. The chain is A-type ATP synthase subunit E from Saccharolobus islandicus (strain Y.N.15.51 / Yellowstone #2) (Sulfolobus islandicus).